Consider the following 493-residue polypeptide: Glutamyl-tRNA(Gln) amidotransferase subunit A (493 aa).

Active-site charge relay system residues include Lys78 and Ser158. The active-site Acyl-ester intermediate is Ser182.

Belongs to the amidase family. GatA subfamily. As to quaternary structure, heterotrimer of A, B and C subunits.

It catalyses the reaction L-glutamyl-tRNA(Gln) + L-glutamine + ATP + H2O = L-glutaminyl-tRNA(Gln) + L-glutamate + ADP + phosphate + H(+). Allows the formation of correctly charged Gln-tRNA(Gln) through the transamidation of misacylated Glu-tRNA(Gln) in organisms which lack glutaminyl-tRNA synthetase. The reaction takes place in the presence of glutamine and ATP through an activated gamma-phospho-Glu-tRNA(Gln). In Beijerinckia indica subsp. indica (strain ATCC 9039 / DSM 1715 / NCIMB 8712), this protein is Glutamyl-tRNA(Gln) amidotransferase subunit A.